A 299-amino-acid polypeptide reads, in one-letter code: Probable lipid kinase YegS (299 aa).

Positions 2–133 (ANFPASLLIL…IDMARVNDKT (132 aa)) constitute a DAGKc domain. ATP is bound by residues threonine 40, 66 to 72 (GDGTINE), and threonine 95. Mg(2+)-binding residues include leucine 215, aspartate 218, and leucine 220. The active-site Proton acceptor is the glutamate 271.

It belongs to the diacylglycerol/lipid kinase family. YegS lipid kinase subfamily. The cofactor is Mg(2+). Ca(2+) is required as a cofactor.

Its subcellular location is the cytoplasm. Probably phosphorylates lipids; the in vivo substrate is unknown. This is Probable lipid kinase YegS from Salmonella gallinarum (strain 287/91 / NCTC 13346).